Here is a 201-residue protein sequence, read N- to C-terminus: Holliday junction branch migration complex subunit RuvA (201 aa).

The segment at 1 to 64 (MYEYIKGKYI…QDFIGLYGFL (64 aa)) is domain I. A domain II region spans residues 65 to 143 (TKDELEMFNK…STDISKGNSE (79 aa)). The interval 144–154 (INNLDVDYDEH) is flexible linker. Positions 154 to 201 (HSKKLEEVRFALNSLGYSEKETDRAINNVDKSEGIENIIKSCLRFLMN) are domain III.

Belongs to the RuvA family. As to quaternary structure, homotetramer. Forms an RuvA(8)-RuvB(12)-Holliday junction (HJ) complex. HJ DNA is sandwiched between 2 RuvA tetramers; dsDNA enters through RuvA and exits via RuvB. An RuvB hexamer assembles on each DNA strand where it exits the tetramer. Each RuvB hexamer is contacted by two RuvA subunits (via domain III) on 2 adjacent RuvB subunits; this complex drives branch migration. In the full resolvosome a probable DNA-RuvA(4)-RuvB(12)-RuvC(2) complex forms which resolves the HJ.

It localises to the cytoplasm. The RuvA-RuvB-RuvC complex processes Holliday junction (HJ) DNA during genetic recombination and DNA repair, while the RuvA-RuvB complex plays an important role in the rescue of blocked DNA replication forks via replication fork reversal (RFR). RuvA specifically binds to HJ cruciform DNA, conferring on it an open structure. The RuvB hexamer acts as an ATP-dependent pump, pulling dsDNA into and through the RuvAB complex. HJ branch migration allows RuvC to scan DNA until it finds its consensus sequence, where it cleaves and resolves the cruciform DNA. The chain is Holliday junction branch migration complex subunit RuvA from Clostridium acetobutylicum (strain ATCC 824 / DSM 792 / JCM 1419 / IAM 19013 / LMG 5710 / NBRC 13948 / NRRL B-527 / VKM B-1787 / 2291 / W).